Here is a 629-residue protein sequence, read N- to C-terminus: tRNA uridine 5-carboxymethylaminomethyl modification enzyme MnmG (629 aa).

Residues 13–18 (GGGHAG), Val125, and Ser180 each bind FAD. An NAD(+)-binding site is contributed by 273–287 (GPRYCPSIEDKVMRF). Residue Gln370 participates in FAD binding.

This sequence belongs to the MnmG family. As to quaternary structure, homodimer. Heterotetramer of two MnmE and two MnmG subunits. Requires FAD as cofactor.

The protein localises to the cytoplasm. NAD-binding protein involved in the addition of a carboxymethylaminomethyl (cmnm) group at the wobble position (U34) of certain tRNAs, forming tRNA-cmnm(5)s(2)U34. This is tRNA uridine 5-carboxymethylaminomethyl modification enzyme MnmG from Escherichia coli O127:H6 (strain E2348/69 / EPEC).